We begin with the raw amino-acid sequence, 332 residues long: 2,3-diketo-L-gulonate reductase (332 aa).

His-44 serves as the catalytic Proton donor. Residues Ile-168–Ser-174, Trp-224–Lys-225, and Gly-304–Glu-306 contribute to the NAD(+) site.

The protein belongs to the LDH2/MDH2 oxidoreductase family. DlgD subfamily. Homodimer.

The protein resides in the cytoplasm. It catalyses the reaction 3-dehydro-L-gulonate + NAD(+) = 2,3-dioxo-L-gulonate + NADH + H(+). The enzyme catalyses 3-dehydro-L-gulonate + NADP(+) = 2,3-dioxo-L-gulonate + NADPH + H(+). Catalyzes the reduction of 2,3-diketo-L-gulonate in the presence of NADH, to form 3-keto-L-gulonate. The protein is 2,3-diketo-L-gulonate reductase of Escherichia coli O6:K15:H31 (strain 536 / UPEC).